A 365-amino-acid polypeptide reads, in one-letter code: Aminomethyltransferase (365 aa).

It belongs to the GcvT family. In terms of assembly, the glycine cleavage system is composed of four proteins: P, T, L and H.

The enzyme catalyses N(6)-[(R)-S(8)-aminomethyldihydrolipoyl]-L-lysyl-[protein] + (6S)-5,6,7,8-tetrahydrofolate = N(6)-[(R)-dihydrolipoyl]-L-lysyl-[protein] + (6R)-5,10-methylene-5,6,7,8-tetrahydrofolate + NH4(+). The glycine cleavage system catalyzes the degradation of glycine. The sequence is that of Aminomethyltransferase from Synechococcus sp. (strain CC9902).